Here is a 251-residue protein sequence, read N- to C-terminus: MIFKKEVSKEDVECVETLLMMSNSKPTREEYNKLQLCILRRNKSSTITTPSTVMESKSHIHDHSLRESPTRRSRNRHDLPPMSPPMEQRKSKKAKRSTDASSSKTREPTPGWLISLMRSKNGGDVEDNSKKIIDKELFQTDVDPHQSRLSIPVSQIVELEFLNHEEKRAIEEDANRVRKEGVDAILVDSHLREFPVNLRLRDMRGILLYNLVAGWNQVVTDCLLEENTNIRLWSFHADDTLYFALVPLYAN.

Residues 48-111 (TTPSTVMESK…SSKTREPTPG (64 aa)) form a disordered region. Basic and acidic residues predominate over residues 56–70 (SKSHIHDHSLRESPT). Positions 153 to 249 (VSQIVELEFL…TLYFALVPLY (97 aa)) form a DNA-binding region, TF-B3.

The protein localises to the nucleus. In Arabidopsis thaliana (Mouse-ear cress), this protein is B3 domain-containing protein At2g24670.